Here is a 387-residue protein sequence, read N- to C-terminus: Carbamoyl phosphate synthase small chain (387 aa).

The interval Met-1–Phe-196 is CPSase. L-glutamine contacts are provided by Ser-51, Gly-245, and Gly-247. The Glutamine amidotransferase type-1 domain maps to His-197–Thr-384. The active-site Nucleophile is Cys-273. The L-glutamine site is built by Leu-274, Gln-277, Asn-315, and Phe-318. Active-site residues include His-357 and Glu-359.

The protein belongs to the CarA family. As to quaternary structure, composed of two chains; the small (or glutamine) chain promotes the hydrolysis of glutamine to ammonia, which is used by the large (or ammonia) chain to synthesize carbamoyl phosphate. Tetramer of heterodimers (alpha,beta)4.

It carries out the reaction hydrogencarbonate + L-glutamine + 2 ATP + H2O = carbamoyl phosphate + L-glutamate + 2 ADP + phosphate + 2 H(+). The catalysed reaction is L-glutamine + H2O = L-glutamate + NH4(+). It functions in the pathway amino-acid biosynthesis; L-arginine biosynthesis; carbamoyl phosphate from bicarbonate: step 1/1. The protein operates within pyrimidine metabolism; UMP biosynthesis via de novo pathway; (S)-dihydroorotate from bicarbonate: step 1/3. Its function is as follows. Small subunit of the glutamine-dependent carbamoyl phosphate synthetase (CPSase). CPSase catalyzes the formation of carbamoyl phosphate from the ammonia moiety of glutamine, carbonate, and phosphate donated by ATP, constituting the first step of 2 biosynthetic pathways, one leading to arginine and/or urea and the other to pyrimidine nucleotides. The small subunit (glutamine amidotransferase) binds and cleaves glutamine to supply the large subunit with the substrate ammonia. This Buchnera aphidicola subsp. Acyrthosiphon pisum (strain APS) (Acyrthosiphon pisum symbiotic bacterium) protein is Carbamoyl phosphate synthase small chain.